The following is a 571-amino-acid chain: Protein EARLY STARVATION 1, chloroplastic (571 aa).

Disordered stretches follow at residues 142 to 162 (RHSS…KDAG) and 215 to 254 (GSYR…TEHD). Low complexity predominate over residues 145-155 (SCSSQSLPQQQ).

Belongs to the ESV1 family.

The protein localises to the plastid. The protein resides in the chloroplast stroma. Binds preferentially to highly ordered alpha-glucans, such as starch and crystalline maltodextrins. Involved in the organization of the starch granule matrix, thus influencing starch turnover by modulating the accessibility of starch polymers to modifying and degrading enzymes. Required for the control of starch degradation in leaves and starch distribution in nonphotosynthetic parts. Promotes gravitropic responses, negative in shoots but positive in roots, by facilitating starch granules (statoliths) formation in hypocotyls and roots columella. The sequence is that of Protein EARLY STARVATION 1, chloroplastic from Marchantia polymorpha (Common liverwort).